The primary structure comprises 347 residues: Quinolinate synthase (347 aa).

Residues His-47 and Ser-68 each contribute to the iminosuccinate site. Cys-113 is a [4Fe-4S] cluster binding site. Iminosuccinate is bound by residues 139 to 141 (YAN) and Ser-156. Cys-200 contacts [4Fe-4S] cluster. Residues 226–228 (HPE) and Thr-243 each bind iminosuccinate. Cys-297 contributes to the [4Fe-4S] cluster binding site.

This sequence belongs to the quinolinate synthase family. Type 1 subfamily. The cofactor is [4Fe-4S] cluster.

The protein resides in the cytoplasm. The enzyme catalyses iminosuccinate + dihydroxyacetone phosphate = quinolinate + phosphate + 2 H2O + H(+). Its pathway is cofactor biosynthesis; NAD(+) biosynthesis; quinolinate from iminoaspartate: step 1/1. Catalyzes the condensation of iminoaspartate with dihydroxyacetone phosphate to form quinolinate. The polypeptide is Quinolinate synthase (Escherichia coli O127:H6 (strain E2348/69 / EPEC)).